We begin with the raw amino-acid sequence, 200 residues long: Holliday junction resolvase RecU (200 aa).

Residues 1–25 (MTIRYPNGKRYNQASQPQKTPIKTH) form a disordered region. The span at 10–25 (RYNQASQPQKTPIKTH) shows a compositional bias: polar residues. Mg(2+) is bound by residues Thr-85, Asp-87, Glu-100, and Gln-119.

The protein belongs to the RecU family. The cofactor is Mg(2+).

It localises to the cytoplasm. The catalysed reaction is Endonucleolytic cleavage at a junction such as a reciprocal single-stranded crossover between two homologous DNA duplexes (Holliday junction).. In terms of biological role, endonuclease that resolves Holliday junction intermediates in genetic recombination. Cleaves mobile four-strand junctions by introducing symmetrical nicks in paired strands. Promotes annealing of linear ssDNA with homologous dsDNA. Required for DNA repair, homologous recombination and chromosome segregation. This is Holliday junction resolvase RecU from Bacillus cereus (strain G9842).